The primary structure comprises 394 residues: Chorismate synthase (394 aa).

R40 and R46 together coordinate NADP(+). FMN-binding positions include 135 to 137 (RAS), 255 to 256 (QA), G302, 317 to 321 (KPISS), and R343.

It belongs to the chorismate synthase family. Homotetramer. It depends on FMNH2 as a cofactor.

It carries out the reaction 5-O-(1-carboxyvinyl)-3-phosphoshikimate = chorismate + phosphate. It functions in the pathway metabolic intermediate biosynthesis; chorismate biosynthesis; chorismate from D-erythrose 4-phosphate and phosphoenolpyruvate: step 7/7. In terms of biological role, catalyzes the anti-1,4-elimination of the C-3 phosphate and the C-6 proR hydrogen from 5-enolpyruvylshikimate-3-phosphate (EPSP) to yield chorismate, which is the branch point compound that serves as the starting substrate for the three terminal pathways of aromatic amino acid biosynthesis. This reaction introduces a second double bond into the aromatic ring system. The polypeptide is Chorismate synthase (Frankia alni (strain DSM 45986 / CECT 9034 / ACN14a)).